A 245-amino-acid chain; its full sequence is 1-(5-phosphoribosyl)-5-[(5-phosphoribosylamino)methylideneamino] imidazole-4-carboxamide isomerase (245 aa).

Asp8 (proton acceptor) is an active-site residue. Asp131 acts as the Proton donor in catalysis.

Belongs to the HisA/HisF family.

It localises to the cytoplasm. The catalysed reaction is 1-(5-phospho-beta-D-ribosyl)-5-[(5-phospho-beta-D-ribosylamino)methylideneamino]imidazole-4-carboxamide = 5-[(5-phospho-1-deoxy-D-ribulos-1-ylimino)methylamino]-1-(5-phospho-beta-D-ribosyl)imidazole-4-carboxamide. Its pathway is amino-acid biosynthesis; L-histidine biosynthesis; L-histidine from 5-phospho-alpha-D-ribose 1-diphosphate: step 4/9. The polypeptide is 1-(5-phosphoribosyl)-5-[(5-phosphoribosylamino)methylideneamino] imidazole-4-carboxamide isomerase (Verminephrobacter eiseniae (strain EF01-2)).